The primary structure comprises 465 residues: Iron-sulfur cluster assembly SufBD family protein SSP1857 (465 aa).

This sequence belongs to the iron-sulfur cluster assembly SufBD family.

The sequence is that of Iron-sulfur cluster assembly SufBD family protein SSP1857 from Staphylococcus saprophyticus subsp. saprophyticus (strain ATCC 15305 / DSM 20229 / NCIMB 8711 / NCTC 7292 / S-41).